Consider the following 870-residue polypeptide: Pre-mRNA-processing factor 40 homolog B (870 aa).

WW domains lie at 92–125 and 133–166; these read GPPRALWSEHVAPDGRIYYYNADDKQSVWEKPSV and LLSQCPWKEYKSDTGKPYYYNNQSQESRWTRPKD. The segment at 146–277 is disordered; it reads TGKPYYYNNQ…RSGLSWSNRE (132 aa). Lys148 bears the N6-acetyllysine mark. Lys175 is covalently cross-linked (Glycyl lysine isopeptide (Lys-Gly) (interchain with G-Cter in SUMO2)). Residues 182-191 are compositionally biased toward low complexity; sequence QQTQQLQTLQ. Residues 192 to 211 are compositionally biased toward pro residues; the sequence is PQPPQPQPDPPPIPPGPIPV. FF domains lie at 276–330, 340–397, 410–470, 490–550, 554–610, and 625–682; these read REKA…YKAQ, RLRA…VLFF, RRRN…HIRA, QRKN…YVEE, RFHD…LLEK, and RMRR…FLQV. Residues 604–640 adopt a coiled-coil conformation; the sequence is FNSLLEKAEARETEREKEEARRMRRREAAFRSMLRQA. The interval 690 to 870 is disordered; that stretch reads HLHTKGRKHG…TLLQQLDDHQ (181 aa). Positions 691–711 are enriched in basic residues; the sequence is LHTKGRKHGRKGKKHHRKRSH. Low complexity-rich tracts occupy residues 739-756 and 764-774; these read SESGSEPSSSLDSVESGG and SPSSHLLLGSD. Ser764 carries the post-translational modification Phosphoserine. A compositionally biased stretch (basic residues) spans 778–794; sequence RKTKKPKKKTKKRRHKS. Basic and acidic residues predominate over residues 804–824; that stretch reads EDKAGKESEDREQEQDREPRQ. Ser831 carries the phosphoserine modification. Lys837 is covalently cross-linked (Glycyl lysine isopeptide (Lys-Gly) (interchain with G-Cter in SUMO2)). The residue at position 851 (Ser851) is a Phosphoserine.

The protein belongs to the PRPF40 family. In terms of assembly, interacts with the N-terminus of HD.

The protein localises to the nucleus speckle. May be involved in pre-mRNA splicing. The polypeptide is Pre-mRNA-processing factor 40 homolog B (Prpf40b) (Mus musculus (Mouse)).